The following is a 748-amino-acid chain: Tyrosine--tRNA ligase 2, cytoplasmic (748 aa).

M1 is modified (N-acetylmethionine). The 'HIGH' region motif lies at 441 to 449 (PSGRMHIAQ). L-tyrosine contacts are provided by Y564, Q568, D571, and Q586. Residues 623–627 (KMSKS) carry the 'KMSKS' region motif. Residue K626 coordinates ATP.

It belongs to the class-I aminoacyl-tRNA synthetase family.

Its subcellular location is the cytoplasm. The protein resides in the cytosol. The enzyme catalyses tRNA(Tyr) + L-tyrosine + ATP = L-tyrosyl-tRNA(Tyr) + AMP + diphosphate + H(+). In terms of biological role, catalyzes the attachment of tyrosine to tRNA(Tyr) in a two-step reaction: tyrosine is first activated by ATP to form Tyr-AMP and then transferred to the acceptor end of tRNA(Tyr). The polypeptide is Tyrosine--tRNA ligase 2, cytoplasmic (Arabidopsis thaliana (Mouse-ear cress)).